Here is a 346-residue protein sequence, read N- to C-terminus: 3-keto-steroid reductase ERG27 (346 aa).

NADP(+) is bound by residues Leu-19, Thr-42, and Lys-48. Catalysis depends on proton donor residues Ser-182 and Tyr-205. Positions 205, 209, and 241 each coordinate NADP(+). Residue Lys-209 is the Lowers pKa of active site Tyr of the active site. A helical membrane pass occupies residues 242 to 262; sequence FSFFQYLNVFTYYGMLFLFYL. N-linked (GlcNAc...) asparagine glycosylation occurs at Asn-272.

This sequence belongs to the short-chain dehydrogenases/reductases (SDR) family. ERG27 subfamily. Heterotetramer of ERG25, ERG26, ERG27 and ERG28. ERG28 acts as a scaffold to tether ERG27 and other 4,4-demethylation-related enzymes, forming a demethylation enzyme complex, in the endoplasmic reticulum. Interacts with ERG25 and ERG28. Also interacts with ERG7, but only in lipid particles.

The protein resides in the endoplasmic reticulum membrane. The protein localises to the lipid droplet. The enzyme catalyses 3-dehydro-4alpha-methylzymosterol + NADPH + H(+) = 4alpha-methylzymosterol + NADP(+). It functions in the pathway steroid biosynthesis; zymosterol biosynthesis; zymosterol from lanosterol: step 5/6. Its function is as follows. 3-keto-steroid reductase; part of the third module of ergosterol biosynthesis pathway that includes the late steps of the pathway. ERG27 is a catalytic component of the C-4 demethylation complex that catalyzes the reduction of the keto group on the C-3. The third module or late pathway involves the ergosterol synthesis itself through consecutive reactions that mainly occur in the endoplasmic reticulum (ER) membrane. Firstly, the squalene synthase ERG9 catalyzes the condensation of 2 farnesyl pyrophosphate moieties to form squalene, which is the precursor of all steroids. Squalene synthase is crucial for balancing the incorporation of farnesyl diphosphate (FPP) into sterol and nonsterol isoprene synthesis. Secondly, the squalene epoxidase ERG1 catalyzes the stereospecific oxidation of squalene to (S)-2,3-epoxysqualene, which is considered to be a rate-limiting enzyme in steroid biosynthesis. Then, the lanosterol synthase ERG7 catalyzes the cyclization of (S)-2,3 oxidosqualene to lanosterol, a reaction that forms the sterol core. In the next steps, lanosterol is transformed to zymosterol through a complex process involving various demethylation, reduction and desaturation reactions. The lanosterol 14-alpha-demethylase ERG11 (also known as CYP51) catalyzes C14-demethylation of lanosterol to produce 4,4'-dimethyl cholesta-8,14,24-triene-3-beta-ol, which is critical for ergosterol biosynthesis. The C-14 reductase ERG24 reduces the C14=C15 double bond of 4,4-dimethyl-cholesta-8,14,24-trienol to produce 4,4-dimethyl-cholesta-8,24-dienol. 4,4-dimethyl-cholesta-8,24-dienol is substrate of the C-4 demethylation complex ERG25-ERG26-ERG27 in which ERG25 catalyzes the three-step monooxygenation required for the demethylation of 4,4-dimethyl and 4alpha-methylsterols, ERG26 catalyzes the oxidative decarboxylation that results in a reduction of the 3-beta-hydroxy group at the C-3 carbon to an oxo group, and ERG27 is responsible for the reduction of the keto group on the C-3. ERG28 has a role as a scaffold to help anchor ERG25, ERG26 and ERG27 to the endoplasmic reticulum and ERG29 regulates the activity of the iron-containing C4-methylsterol oxidase ERG25. Then, the sterol 24-C-methyltransferase ERG6 catalyzes the methyl transfer from S-adenosyl-methionine to the C-24 of zymosterol to form fecosterol. The C-8 sterol isomerase ERG2 catalyzes the reaction which results in unsaturation at C-7 in the B ring of sterols and thus converts fecosterol to episterol. The sterol-C5-desaturase ERG3 then catalyzes the introduction of a C-5 double bond in the B ring to produce 5-dehydroepisterol. The C-22 sterol desaturase ERG5 further converts 5-dehydroepisterol into ergosta-5,7,22,24(28)-tetraen-3beta-ol by forming the C-22(23) double bond in the sterol side chain. Finally, ergosta-5,7,22,24(28)-tetraen-3beta-ol is substrate of the C-24(28) sterol reductase ERG4 to produce ergosterol. Facilitates the association of ERG7 with lipid particles preventing its digestion in the endoplasmic reticulum and the lipid particles. This Candida albicans (strain SC5314 / ATCC MYA-2876) (Yeast) protein is 3-keto-steroid reductase ERG27.